Reading from the N-terminus, the 202-residue chain is Alpha-S1-casein (202 aa).

Disordered regions lie at residues 1–25 (RPKL…VLKE) and 51–84 (LKEK…VVPI). 2 stretches are compositionally biased toward basic and acidic residues: residues 16 to 25 (QDSREKVLKE) and 51 to 63 (LKEK…KEYL). The residue at position 18 (serine 18) is a Phosphoserine. Low complexity predominate over residues 70 to 80 (QESSSTSSSEE). Phosphoserine occurs at positions 72, 73, 74, 76, 77, and 78.

It belongs to the alpha-casein family. Mammary gland specific. Secreted in milk.

It localises to the secreted. Its function is as follows. Important role in the capacity of milk to transport calcium phosphate. The protein is Alpha-S1-casein of Equus asinus (Donkey).